We begin with the raw amino-acid sequence, 164 residues long: Crossover junction endodeoxyribonuclease RuvC (164 aa).

Catalysis depends on residues Asp7, Glu66, and Asp138. 3 residues coordinate Mg(2+): Asp7, Glu66, and Asp138.

Belongs to the RuvC family. In terms of assembly, homodimer which binds Holliday junction (HJ) DNA. The HJ becomes 2-fold symmetrical on binding to RuvC with unstacked arms; it has a different conformation from HJ DNA in complex with RuvA. In the full resolvosome a probable DNA-RuvA(4)-RuvB(12)-RuvC(2) complex forms which resolves the HJ. The cofactor is Mg(2+).

Its subcellular location is the cytoplasm. The catalysed reaction is Endonucleolytic cleavage at a junction such as a reciprocal single-stranded crossover between two homologous DNA duplexes (Holliday junction).. In terms of biological role, the RuvA-RuvB-RuvC complex processes Holliday junction (HJ) DNA during genetic recombination and DNA repair. Endonuclease that resolves HJ intermediates. Cleaves cruciform DNA by making single-stranded nicks across the HJ at symmetrical positions within the homologous arms, yielding a 5'-phosphate and a 3'-hydroxyl group; requires a central core of homology in the junction. The consensus cleavage sequence is 5'-(A/T)TT(C/G)-3'. Cleavage occurs on the 3'-side of the TT dinucleotide at the point of strand exchange. HJ branch migration catalyzed by RuvA-RuvB allows RuvC to scan DNA until it finds its consensus sequence, where it cleaves and resolves the cruciform DNA. The protein is Crossover junction endodeoxyribonuclease RuvC of Paracoccus denitrificans (strain Pd 1222).